Consider the following 148-residue polypeptide: Ribonuclease pancreatic (148 aa).

The N-terminal stretch at 1 to 25 (MGLEKSLILFPLLVLVVGWVQPSLG) is a signal peptide. Residues K32, R35, 65-69 (KPVNT), K90, and R109 contribute to the substrate site. Intrachain disulfides connect C50-C108, C64-C119, C82-C134, and C89-C96. H143 serves as the catalytic Proton donor.

It belongs to the pancreatic ribonuclease family. Monomer. Interacts with and forms tight 1:1 complexes with RNH1. Dimerization of two such complexes may occur. Interaction with RNH1 inhibits this protein. As to expression, pancreas.

Its subcellular location is the secreted. It carries out the reaction an [RNA] containing cytidine + H2O = an [RNA]-3'-cytidine-3'-phosphate + a 5'-hydroxy-ribonucleotide-3'-[RNA].. The enzyme catalyses an [RNA] containing uridine + H2O = an [RNA]-3'-uridine-3'-phosphate + a 5'-hydroxy-ribonucleotide-3'-[RNA].. Functionally, endonuclease that catalyzes the cleavage of RNA on the 3' side of pyrimidine nucleotides. Acts on single-stranded and double-stranded RNA. The sequence is that of Ribonuclease pancreatic (RNASE1) from Peromyscus leucopus (White-footed mouse).